Here is a 434-residue protein sequence, read N- to C-terminus: Glutamate-1-semialdehyde 2,1-aminomutase 1 (434 aa).

The residue at position 270 (Lys-270) is an N6-(pyridoxal phosphate)lysine.

This sequence belongs to the class-III pyridoxal-phosphate-dependent aminotransferase family. HemL subfamily. Homodimer. Requires pyridoxal 5'-phosphate as cofactor.

It is found in the cytoplasm. It catalyses the reaction (S)-4-amino-5-oxopentanoate = 5-aminolevulinate. Its pathway is porphyrin-containing compound metabolism; protoporphyrin-IX biosynthesis; 5-aminolevulinate from L-glutamyl-tRNA(Glu): step 2/2. The sequence is that of Glutamate-1-semialdehyde 2,1-aminomutase 1 from Bacillus anthracis (strain CDC 684 / NRRL 3495).